Reading from the N-terminus, the 261-residue chain is Putative diacylated glycolipid transporter LprF (261 aa).

The first 38 residues, 1–38 (MNGLISQACGSHRPRRPSSLGAVAILIAATLFATVVAG), serve as a signal peptide directing secretion. The N-palmitoyl cysteine moiety is linked to residue C39. C39 carries S-diacylglycerol cysteine lipidation. Residues 42 to 61 (KPTTASSPSPGSPSPEAQQI) form a disordered region.

It belongs to the LppX/LprAFG lipoprotein family. In terms of assembly, monomer. Post-translationally, modified by Lgt on Cys-39 with an S-linked diacylglycerol with a mixture of C16, C18 and C19 fatty acids (palmitic, stearic and tuberculostearic acid respectively), signal peptide is removed by LspA, modified by Lnt with an amide-linked mixture of C16 and C19 fatty acids.

Its subcellular location is the cell membrane. In terms of biological role, might be involved in transporting short diacylated glycolipids to the cell outer membrane. Binds glycolipids that contain a diacylated glycerophosphate or a diacylated phosphatidylinositol moiety with C14 and C16 chains (upon overexpression in M.smegmatis; M.smegmatis does not encode this gene). Overexpression in M.smegmatis increases the cell wall glycolipid LAM/LM ratio (lipoarabinomannan/lipomannan), suggesting perhaps this protein is involved in the preferential translocation of diacylated LAM to the outer cell membrane. Overexpressing M.smegmatis cells adhere less well to hexadecane droplets, indicating decrease in the hydrophobicity of the cell surface, and have a slightly increased resistance to the antibiotic ethambutol. The chain is Putative diacylated glycolipid transporter LprF (lprF) from Mycobacterium bovis (strain ATCC BAA-935 / AF2122/97).